Reading from the N-terminus, the 200-residue chain is Signal peptidase complex catalytic subunit SEC11 (200 aa).

Topologically, residues 1-15 (MFAELAPYLSNPRQT) are cytoplasmic. Residues 16–33 (LAQLLNFALVLSTAFMGW) traverse the membrane as a helical; Signal-anchor for type II membrane protein segment. The Lumenal segment spans residues 34 to 200 (KALSVYTNSS…MGVMVMLQRE (167 aa)). A glycan (N-linked (GlcNAc...) asparagine) is linked at asparagine 41. Residues serine 53 and histidine 92 each act as charge relay system in the active site. Positions 101–134 (GDGGKKSQRRLEREADKRSGPGLSSPVSHQMLTK) are disordered. Positions 103–119 (GGKKSQRRLEREADKRS) are enriched in basic and acidic residues. Aspartate 142 acts as the Charge relay system in catalysis. The segment at 186-197 (VLLGIMGVMVML) is C-terminal short (CTS) helix.

The protein belongs to the peptidase S26B family. In terms of assembly, component of the signal peptidase complex (SPC) composed of a catalytic subunit SEC11 and three accessory subunits SPC1, SPC2 and SPC3. The complex induces a local thinning of the ER membrane which is used to measure the length of the signal peptide (SP) h-region of protein substrates. This ensures the selectivity of the complex towards h-regions shorter than 18-20 amino acids. SPC associates with the translocon complex.

It is found in the endoplasmic reticulum membrane. The catalysed reaction is Cleavage of hydrophobic, N-terminal signal or leader sequences from secreted and periplasmic proteins.. Catalytic component of the signal peptidase complex (SPC) which catalyzes the cleavage of N-terminal signal sequences from nascent proteins as they are translocated into the lumen of the endoplasmic reticulum. Specifically cleaves N-terminal signal peptides that contain a hydrophobic alpha-helix (h-region) shorter than 18-20 amino acids. The protein is Signal peptidase complex catalytic subunit SEC11 (SEC11) of Arthroderma benhamiae (strain ATCC MYA-4681 / CBS 112371) (Trichophyton mentagrophytes).